Reading from the N-terminus, the 233-residue chain is Histone H1-I (233 aa).

Disordered stretches follow at residues 1 to 55 (MSDS…HPPV) and 115 to 233 (TGAS…KKSK). The span at 17-29 (KAASPAKSPAKSP) shows a compositional bias: low complexity. One can recognise an H15 domain in the interval 51-125 (THPPVSEMVV…GASGSFKMPP (75 aa)). Basic and acidic residues-rich tracts occupy residues 128–137 (KKVDRPESAP) and 146–155 (TRVERKEKKV). Composition is skewed to basic residues over residues 172 to 213 (AAKK…KPTP) and 223 to 233 (AAARKPAKKSK).

This sequence belongs to the histone H1/H5 family.

It is found in the nucleus. The protein localises to the chromosome. Its function is as follows. Histones H1 are necessary for the condensation of nucleosome chains into higher-order structures. The protein is Histone H1-I of Glyptotendipes barbipes (Midge).